The sequence spans 345 residues: Serine proteinase inhibitor 2 (345 aa).

Belongs to the serpin family. Poxviruses subfamily.

The protein localises to the host cytoplasm. Viral serpin that inhibits both cysteine and serine proteinases involved in the regulation of host inflammatory and apoptosis processes. Major anti-apoptotic protein which inhibits both intrinsic and extrinsic pathways and strongly cleaves host CASP1 and CASP8 but is a rather poor inhibitor of host CASP3. Prevents the proteolytic activity of host interleukin-1-beta converting enzyme (ICE) and ICE-like enzymes. Can also block apoptosis through host tumor necrosis factor (TNF) receptor. The inhibition of host ICE is an example of a 'cross-class' interaction, in which a serpin inhibits a non-serine proteinase. Also inhibits granzyme B. This is Serine proteinase inhibitor 2 (OPG199) from Rabbitpox virus (strain Utrecht) (RPV).